Reading from the N-terminus, the 174-residue chain is Large ribosomal subunit protein bL17 (174 aa).

The protein belongs to the bacterial ribosomal protein bL17 family. In terms of assembly, part of the 50S ribosomal subunit. Contacts protein L32.

The sequence is that of Large ribosomal subunit protein bL17 from Acetivibrio thermocellus (strain ATCC 27405 / DSM 1237 / JCM 9322 / NBRC 103400 / NCIMB 10682 / NRRL B-4536 / VPI 7372) (Clostridium thermocellum).